Consider the following 271-residue polypeptide: MPELPEVEVCRLGISPHVIAQEVSEVIIRNKRLRWPIPDEVCSAVGLPVLKVERRAKYLLLRFSTGTLLLHLGMSGTIRVIEQDTPVAKHDHFDLVFKHGKSLRLNDPRRFGAVLWLANDEDELGLLAKLGPEPLSDDFAEGYLFSKAKNRKVPIKTFLMNNHVVVGVGNIYANEALFQAGILPTAKAKDIDEHRMNSLTAIIKKVLSAAIAQGGTTLKDFTQADGRPGYFAQSLMVYGRAGEACVTCKTKLQEIRQSNRSSVFCPSCQQD.

P2 functions as the Schiff-base intermediate with DNA in the catalytic mechanism. E3 serves as the catalytic Proton donor. K57 functions as the Proton donor; for beta-elimination activity in the catalytic mechanism. DNA-binding residues include H90, R109, and R151. An FPG-type zinc finger spans residues 236-270 (MVYGRAGEACVTCKTKLQEIRQSNRSSVFCPSCQQ). Residue R260 is the Proton donor; for delta-elimination activity of the active site.

This sequence belongs to the FPG family. In terms of assembly, monomer. Zn(2+) is required as a cofactor.

It carries out the reaction Hydrolysis of DNA containing ring-opened 7-methylguanine residues, releasing 2,6-diamino-4-hydroxy-5-(N-methyl)formamidopyrimidine.. It catalyses the reaction 2'-deoxyribonucleotide-(2'-deoxyribose 5'-phosphate)-2'-deoxyribonucleotide-DNA = a 3'-end 2'-deoxyribonucleotide-(2,3-dehydro-2,3-deoxyribose 5'-phosphate)-DNA + a 5'-end 5'-phospho-2'-deoxyribonucleoside-DNA + H(+). In terms of biological role, involved in base excision repair of DNA damaged by oxidation or by mutagenic agents. Acts as a DNA glycosylase that recognizes and removes damaged bases. Has a preference for oxidized purines, such as 7,8-dihydro-8-oxoguanine (8-oxoG). Has AP (apurinic/apyrimidinic) lyase activity and introduces nicks in the DNA strand. Cleaves the DNA backbone by beta-delta elimination to generate a single-strand break at the site of the removed base with both 3'- and 5'-phosphates. This chain is Formamidopyrimidine-DNA glycosylase, found in Colwellia psychrerythraea (strain 34H / ATCC BAA-681) (Vibrio psychroerythus).